Reading from the N-terminus, the 769-residue chain is 3-O-beta-D-glucopyranosyl-beta-D-glucuronide phosphorylase (769 aa).

Catalysis depends on D457, which acts as the Proton donor.

The protein belongs to the glycosyl hydrolase 94 family. Homodimer.

The protein resides in the cytoplasm. The enzyme catalyses 3-O-beta-D-glucosyl-D-glucuronate + phosphate = aldehydo-D-glucuronate + alpha-D-glucose 1-phosphate. It carries out the reaction a 3-O-beta-D-glucosyl-beta-D-glucuronoside + phosphate = a beta-D-glucuronoside + alpha-D-glucose 1-phosphate. Its function is as follows. Glycoside phosphorylase that catalyzes the reversible phosphorolysis of 3-O-beta-D-glucosyl-D-glucuronate into D-glucuronic acid and alpha-D-glucose 1-phosphate. Cannot phosphorolyze cellobionic acid and laminaribiose. In the reverse direction, using alpha-D-glucose 1-phosphate as a donor substrate, the enzyme acts on D-glucuronate and its artificial derivative p-nitrophenyl-beta-D-glucuronide. The apparent catalytic efficiency towards p-nitrophenyl-beta-D-glucuronide is approximately 5-fold higher than that towards D-glucuronic acid. Is probably involved in the metabolism of oligosaccharides containing the 3-O-beta-D-glucopyranosyl-beta-D-glucuronide structure released from bacterial and plant acidic carbohydrates. The sequence is that of 3-O-beta-D-glucopyranosyl-beta-D-glucuronide phosphorylase from Paenibacillus borealis.